Consider the following 20-residue polypeptide: Agglutinin beta-2 chain (20 aa).

The segment at 1–20 (GRNGKSQSIIVGPWGDRVTN) is disordered.

It belongs to the jacalin lectin family. In terms of assembly, formed of four alpha chains and four beta chains.

D-galactose-specific lectin, binds the T-antigen structure Gal-beta1,3-GalNAc. This is Agglutinin beta-2 chain from Maclura pomifera (Osage orange).